The following is a 209-amino-acid chain: V-type ATP synthase subunit D (209 aa).

This sequence belongs to the V-ATPase D subunit family.

Functionally, produces ATP from ADP in the presence of a proton gradient across the membrane. The polypeptide is V-type ATP synthase subunit D (atpD) (Chlamydia pneumoniae (Chlamydophila pneumoniae)).